The sequence spans 30 residues: Phospholipase A2 acanmyotoxin-2 (30 aa).

Positions 28 and 30 each coordinate Ca(2+).

Ca(2+) is required as a cofactor. In terms of processing, contains seven disulfide bonds. Expressed by the venom gland.

The protein localises to the secreted. It catalyses the reaction a 1,2-diacyl-sn-glycero-3-phosphocholine + H2O = a 1-acyl-sn-glycero-3-phosphocholine + a fatty acid + H(+). Functionally, snake venom phospholipase A2 (PLA2) that has myotoxic activity but no significant neurotoxicity. PLA2 catalyzes the calcium-dependent hydrolysis of the 2-acyl groups in 3-sn-phosphoglycerides. This Acanthophis sp. (strain Seram) (Seram death adder) protein is Phospholipase A2 acanmyotoxin-2.